Here is a 1303-residue protein sequence, read N- to C-terminus: Endoplasmic reticulum transmembrane helix translocase spfA (1303 aa).

2 helical membrane passes run 25–45 (LHAYVWPFLIIWPAFFAVYLS) and 57–77 (EWTFVWSGSIITAQSLLWLMT). The segment at 158–191 (KPPVKVFQQAQGLTSKEEIDRIQHHYGDNTFDIP) is A-domain; part 1. 2 helical membrane passes run 201-221 (EHAVAPFFVFQVFCVGLWMLD) and 223-243 (YWYYSLFTLFMLVVFESTVVW). The A-domain; part 2 stretch occupies residues 256 to 408 (NIKPYDVWVY…LVRTMIYSTE (153 aa)). An N-linked (GlcNAc...) asparagine glycan is attached at asparagine 287. Residues 415 to 435 (VEALLFILFLLIFAIAAAWYV) form a helical membrane-spanning segment. The N-linked (GlcNAc...) asparagine glycan is linked to asparagine 474. Residues 484–513 (AIFCTEPFRIPFAGRVDVACFDKTGTLTGE) form a P-domain; part 1 region. The 4-aspartylphosphate intermediate role is filled by aspartate 505. The Mg(2+) site is built by aspartate 505 and threonine 507. Residue 505-507 (DKT) participates in ATP binding. Residues 515–721 (LVVDGIAGLT…FAGFLVLQCP (207 aa)) form an N-domain region. Asparagine 589 is a glycosylation site (N-linked (GlcNAc...) asparagine). ATP-binding residues include phenylalanine 616 and arginine 678. The interval 724-883 (EDAIKAVRML…HVGVALLNGS (160 aa)) is P-domain; part 2. A glycan (N-linked (GlcNAc...) asparagine) is linked at asparagine 734. Residues aspartate 746 and 862-866 (DGTND) each bind ATP. Aspartate 862 is a binding site for Mg(2+). The segment at 884 to 1019 (PEDLAKIAEH…ELDDSEPPTI (136 aa)) is arm-like. N-linked (GlcNAc...) asparagine glycosylation is present at asparagine 958. A P-domain; part 3 region spans residues 1020–1035 (KLGDASVAAPFTSKLA). 5 consecutive transmembrane segments (helical) span residues 1060 to 1080 (ILALNCLISAYSLSVIYLDGI), 1082 to 1102 (FGDGQVTISGMLMSVCFLSIS), 1122 to 1142 (VYIIGSVLGQFAIHIATLIYL), 1201 to 1221 (AMYWGLVAASGVAFSCATEFI), and 1239 to 1259 (VTLTVLMIIDYAGCWIIENVL). Residues 1277 to 1303 (DQLQREMERKKQEELETQAEKERQRKV) are disordered.

The protein belongs to the cation transport ATPase (P-type) (TC 3.A.3) family. Type V subfamily. Requires Mg(2+) as cofactor.

It localises to the endoplasmic reticulum membrane. It carries out the reaction [protein]-with a C-terminal TM segment(out) + ATP + H2O = [protein]-with a C-terminal TM segment(in) + ADP + phosphate + H(+). With respect to regulation, the ATPase activity is stimulated by phosphatidylinositol 4-phosphate (PI4P). In terms of biological role, endoplasmic reticulum (ER) translocase required to remove mitochondrial transmembrane proteins mistargeted to the endoplasmic reticulum. Acts as a dislocase that mediates the ATP-dependent extraction of mislocalized mitochondrial transmembrane proteins from the endoplasmic reticulum membrane. Works in concert with the ER Ca(2+) pump srcA to support ER homeostasis. With srcA, also supports redox homeostasis and virulence. This Aspergillus fumigatus (strain ATCC MYA-4609 / CBS 101355 / FGSC A1100 / Af293) (Neosartorya fumigata) protein is Endoplasmic reticulum transmembrane helix translocase spfA.